The sequence spans 439 residues: GTPase Obg (439 aa).

Positions 5–164 (TDFFDQATIV…LTLELELKML (160 aa)) constitute an Obg domain. One can recognise an OBG-type G domain in the interval 165–335 (ADVGLVGFPN…LLRRVADLLR (171 aa)). Residues 171 to 178 (GFPNAGKS), 196 to 200 (FTTLT), 217 to 220 (DIPG), 287 to 290 (NKAD), and 316 to 318 (SAA) contribute to the GTP site. Positions 178 and 198 each coordinate Mg(2+). In terms of domain architecture, OCT spans 356–433 (LPEVDENAFT…IGRAELVWDD (78 aa)).

The protein belongs to the TRAFAC class OBG-HflX-like GTPase superfamily. OBG GTPase family. As to quaternary structure, monomer. Mg(2+) serves as cofactor.

Its subcellular location is the cytoplasm. Its function is as follows. An essential GTPase which binds GTP, GDP and possibly (p)ppGpp with moderate affinity, with high nucleotide exchange rates and a fairly low GTP hydrolysis rate. Plays a role in control of the cell cycle, stress response, ribosome biogenesis and in those bacteria that undergo differentiation, in morphogenesis control. The sequence is that of GTPase Obg from Chloroflexus aurantiacus (strain ATCC 29364 / DSM 637 / Y-400-fl).